A 131-amino-acid chain; its full sequence is Fatty acid-binding protein (131 aa).

(5Z,8Z,11Z,14Z)-eicosatetraenoate is bound by residues Arg-106 and 126-128 (RPY). Residues Arg-106 and 126 to 128 (RPY) contribute to the (9Z)-octadecenoate site.

It belongs to the calycin superfamily. Fatty-acid binding protein (FABP) family.

Its subcellular location is the cytoplasm. Functionally, FABPs are thought to play a role in the intracellular transport of long-chain fatty acids and their acyl-CoA esters. The protein is Fatty acid-binding protein of Lepidoglyphus destructor (Storage mite).